Consider the following 1038-residue polypeptide: Zinc finger protein 628 (1038 aa).

Residues 1 to 31 form a disordered region; that stretch reads MAGSHVDMAPASTTEGTGEKPGPTAPAPTPA. Residues 13 to 22 are compositionally biased toward low complexity; the sequence is TTEGTGEKPG. C2H2-type zinc fingers lie at residues 34-56, 62-84, 90-112, 118-140, 146-168, and 174-196; these read YECG…QRTH, YKCP…QRGH, YQCP…RSVH, FTCG…LRQH, YPCP…RHVH, and YTCG…QRVH. The residue at position 197 (Thr-197) is a Phosphothreonine. The C2H2-type 7 zinc finger occupies 202–224; it reads FRCPLCPKTFTHSSNLLLHHRTH. 2 disordered regions span residues 220–242 and 254–273; these read HHRT…ETSR and LQPR…PPVV. Pro residues-rich tracts occupy residues 227–237 and 257–273; these read APGPAPAPAPP and RSPP…PPVV. 7 consecutive C2H2-type zinc fingers follow at residues 346-368, 376-398, 446-468, 474-496, 502-524, 530-552, and 558-580; these read FACL…QHSH, FRCG…QQCH, YKCA…LRDH, YQCG…QRVH, FTCG…LRLH, YACT…RHVH, and HSCS…QRVH. Residue Thr-581 is modified to Phosphothreonine. 2 C2H2-type zinc fingers span residues 586–608 and 614–636; these read FRCP…QRTH and FACP…LRTH. Disordered regions lie at residues 637–661 and 717–763; these read TPAT…LAAA and PSSV…AGQG. Residues 723–733 show a composition bias toward pro residues; sequence PTPPPPPPPPK. The segment covering 734 to 756 has biased composition (low complexity); the sequence is VILLPPASAGGPGSGAARPGPRS. 4 consecutive repeat copies span residues 811-821, 822-832, 833-843, and 844-854. A 4 X 11 AA tandem repeats of VQLQP-[AL]-[QT]-[EG]-[VQ]-[ATV]-[ST] region spans residues 811 to 854; it reads VQLQPAQEVATVQLQPAQEVTTVQLQPAQEVTTVQLQPLTGQVS. The interaction with TAF4B stretch occupies residues 922–1038; the sequence is DGEQTRLCVQ…LPAVQLVHTF (117 aa).

As to quaternary structure, interacts with TAF4B. Expressed widely in testis, in both germline and somatic cells. Seems to have particularly strong expression in meiotic spermatocytes, postmeiotic round spermatids and Sertoli cells. Not detected in elongating spermatids or mature sperm (at protein level). Expressed in testis, ovary, spleen, lung, brain, liver and kidney. Expressed in D3 embryonic stem cells and F9 embryonal carcinoma cells.

Its subcellular location is the nucleus. Functionally, transcriptional activator. Binds DNA on GT-box consensus sequence 5'-TTGGTT-3'. Plays a role in spermiogenesis. This is Zinc finger protein 628 from Mus musculus (Mouse).